The sequence spans 84 residues: Large ribosomal subunit protein bL27 (84 aa).

The tract at residues 1–22 is disordered; sequence MAHKKAGGSTRNGRDSESKRLG.

It belongs to the bacterial ribosomal protein bL27 family.

This Shewanella loihica (strain ATCC BAA-1088 / PV-4) protein is Large ribosomal subunit protein bL27.